The following is a 454-amino-acid chain: Mitochondrial dynamics protein MID49 (454 aa).

At 1-22 the chain is on the mitochondrial intermembrane side; the sequence is MAEFSQKQRKQSGSEGLGSVVD. A helical transmembrane segment spans residues 23 to 43; sequence FLLANARLVLGVGGAAVLGIA. Residues 44 to 454 lie on the Cytoplasmic side of the membrane; sequence TLAVKRLIDR…SGLQVPESLF (411 aa). Positions 76 to 113 are disordered; the sequence is ATSPQKPQPPPAAFSQPLATGSPSPSVPVEPTPIHSPT.

It belongs to the MID49/MID51 family. As to quaternary structure, interacts with DNM1L.

It localises to the mitochondrion outer membrane. Its function is as follows. Mitochondrial outer membrane protein which regulates mitochondrial organization. It is required for mitochondrial fission and promotes the recruitment and association of the fission mediator dynamin-related protein 1 (DNM1L) to the mitochondrial surface independently of the mitochondrial fission FIS1 and MFF proteins. Regulates DNM1L GTPase activity. The chain is Mitochondrial dynamics protein MID49 (Mief2) from Mus musculus (Mouse).